The following is a 167-amino-acid chain: Pathogenesis-related protein PR-1 type (167 aa).

Residues 1–29 (MAHNHWCNLFSVALVCVVALVMVQYSVAQ) form the signal peptide. The 120-residue stretch at 36 to 155 (VDAHNAARSA…NGAWFITCNY (120 aa)) folds into the SCP domain. 3 disulfides stabilise this stretch: Cys-72-Cys-144, Cys-117-Cys-123, and Cys-139-Cys-153.

Belongs to the CRISP family.

Its function is as follows. Probably involved in the defense reaction of plants against pathogens. This is Pathogenesis-related protein PR-1 type from Sambucus nigra (European elder).